The chain runs to 197 residues: MADILTQLQTCLDQLATQFYATVAYLTTYHDHSPAIPPPSVPSAVPQLKKIPKNPPPAAPTSGTATNTPGAAGGPSGDTKDAAAGPSNAPQMQQQHQEQPPDAPPRPDSPNTFLMRQRELARDLIIKEQQIEYLISVLPGIKSSEAEQQERIKQLAEELRVVEEERSARRRELRRLGEKVDGLLGAVSRGTGISNSG.

The segment at 37-112 (PPPSVPSAVP…APPRPDSPNT (76 aa)) is disordered. 2 stretches are compositionally biased toward low complexity: residues 60-70 (PTSGTATNTPG) and 90-100 (PQMQQQHQEQP). Residues 140 to 183 (GIKSSEAEQQERIKQLAEELRVVEEERSARRRELRRLGEKVDGL) are a coiled coil.

It belongs to the Mediator complex subunit 21 family. As to quaternary structure, component of the Mediator complex.

Its subcellular location is the nucleus. Its function is as follows. Component of the Mediator complex, a coactivator involved in the regulated transcription of nearly all RNA polymerase II-dependent genes. Mediator functions as a bridge to convey information from gene-specific regulatory proteins to the basal RNA polymerase II transcription machinery. Mediator is recruited to promoters by direct interactions with regulatory proteins and serves as a scaffold for the assembly of a functional preinitiation complex with RNA polymerase II and the general transcription factors. This is Mediator of RNA polymerase II transcription subunit 21 (SRB7) from Coccidioides immitis (strain RS) (Valley fever fungus).